A 1129-amino-acid polypeptide reads, in one-letter code: DNA-directed RNA polymerase I subunit RPA2 (1129 aa).

Residues 1061 to 1093 (CHKCGSILAPLQRIVKRNETGGLSSQPDTCRLC) form a C4-type zinc finger.

Belongs to the RNA polymerase beta chain family. Component of the RNA polymerase I (Pol I) complex consisting of at least 13 subunits.

It localises to the nucleus. The protein localises to the nucleolus. It catalyses the reaction RNA(n) + a ribonucleoside 5'-triphosphate = RNA(n+1) + diphosphate. Functionally, DNA-dependent RNA polymerase catalyzes the transcription of DNA into RNA using the four ribonucleoside triphosphates as substrates. Second largest core component of RNA polymerase I which synthesizes ribosomal RNA precursors. Proposed to contribute to the polymerase catalytic activity and forms the polymerase active center together with the largest subunit. Pol I is composed of mobile elements and RPA2 is part of the core element with the central large cleft and probably a clamp element that moves to open and close the cleft. This chain is DNA-directed RNA polymerase I subunit RPA2, found in Drosophila melanogaster (Fruit fly).